A 427-amino-acid chain; its full sequence is Histidinol dehydrogenase (427 aa).

Substrate is bound by residues S232, Q254, and H257. Zn(2+)-binding residues include Q254 and H257. Residues E322 and H323 each act as proton acceptor in the active site. Residues H323, D356, E410, and H415 each coordinate substrate. Zn(2+) is bound at residue D356. H415 contributes to the Zn(2+) binding site.

Belongs to the histidinol dehydrogenase family. The cofactor is Zn(2+).

It catalyses the reaction L-histidinol + 2 NAD(+) + H2O = L-histidine + 2 NADH + 3 H(+). It participates in amino-acid biosynthesis; L-histidine biosynthesis; L-histidine from 5-phospho-alpha-D-ribose 1-diphosphate: step 9/9. Catalyzes the sequential NAD-dependent oxidations of L-histidinol to L-histidinaldehyde and then to L-histidine. The polypeptide is Histidinol dehydrogenase (Listeria monocytogenes serovar 1/2a (strain ATCC BAA-679 / EGD-e)).